Here is a 396-residue protein sequence, read N- to C-terminus: Elongation factor Tu 2 (396 aa).

The 197-residue stretch at lysine 10 to glutamate 206 folds into the tr-type G domain. The interval glycine 19–threonine 26 is G1. Glycine 19 to threonine 26 serves as a coordination point for GTP. Mg(2+) is bound at residue threonine 26. The segment at glycine 60–asparagine 64 is G2. The segment at aspartate 81 to glycine 84 is G3. GTP-binding positions include aspartate 81–histidine 85 and asparagine 136–aspartate 139. Residues asparagine 136–aspartate 139 are G4. The tract at residues serine 174–lysine 176 is G5.

The protein belongs to the TRAFAC class translation factor GTPase superfamily. Classic translation factor GTPase family. EF-Tu/EF-1A subfamily. In terms of assembly, monomer.

It localises to the cytoplasm. It catalyses the reaction GTP + H2O = GDP + phosphate + H(+). Functionally, GTP hydrolase that promotes the GTP-dependent binding of aminoacyl-tRNA to the A-site of ribosomes during protein biosynthesis. This chain is Elongation factor Tu 2, found in Albidiferax ferrireducens (strain ATCC BAA-621 / DSM 15236 / T118) (Rhodoferax ferrireducens).